Reading from the N-terminus, the 334-residue chain is Anthranilate phosphoribosyltransferase (334 aa).

5-phospho-alpha-D-ribose 1-diphosphate-binding positions include Gly-79, 82-83 (GD), Ser-87, 89-92 (NIST), 107-115 (KHGNRSISS), and Ser-119. Gly-79 is an anthranilate binding site. Residue Ser-91 coordinates Mg(2+). An anthranilate-binding site is contributed by Asn-110. Arg-165 is an anthranilate binding site. Residues Asp-224 and Glu-225 each coordinate Mg(2+).

It belongs to the anthranilate phosphoribosyltransferase family. As to quaternary structure, homodimer. The cofactor is Mg(2+).

The catalysed reaction is N-(5-phospho-beta-D-ribosyl)anthranilate + diphosphate = 5-phospho-alpha-D-ribose 1-diphosphate + anthranilate. It functions in the pathway amino-acid biosynthesis; L-tryptophan biosynthesis; L-tryptophan from chorismate: step 2/5. Its function is as follows. Catalyzes the transfer of the phosphoribosyl group of 5-phosphorylribose-1-pyrophosphate (PRPP) to anthranilate to yield N-(5'-phosphoribosyl)-anthranilate (PRA). This is Anthranilate phosphoribosyltransferase from Streptococcus sanguinis (strain SK36).